Reading from the N-terminus, the 147-residue chain is Epididymal secretory protein E3-alpha (147 aa).

An N-terminal signal peptide occupies residues 1–25; it reads MTSSLKIWGILLALLCILCRLCVYS.

In terms of tissue distribution, epididymis, with predominant expression in the corpus region. Moderately expressed in the vas deferens; only low levels are detectable in the caput and cauda regions.

It is found in the secreted. Possible function in sperm maturation. The chain is Epididymal secretory protein E3-alpha (EDDM3A) from Homo sapiens (Human).